We begin with the raw amino-acid sequence, 433 residues long: Legumain (433 aa).

An N-terminal signal peptide occupies residues 1–17; the sequence is MVWKVAVFLSAALVIGA. N-linked (GlcNAc...) asparagine glycosylation is present at Asn-91. His-148 is an active-site residue. N-linked (GlcNAc...) asparagine glycosylation is present at Asn-167. Catalysis depends on Cys-189, which acts as the Nucleophile. Asn-263 and Asn-272 each carry an N-linked (GlcNAc...) asparagine glycan. A propeptide spanning residues 324-433 is cleaved from the precursor; the sequence is DLEESRQLTE…SMDHVCLGHY (110 aa). 2 disulfide bridges follow: Cys-378–Cys-412 and Cys-390–Cys-429.

This sequence belongs to the peptidase C13 family. Homodimer before autocatalytic removal of the propeptide. Monomer after autocatalytic processing. May interact with integrins. Activated by autocatalytic processing at pH 4.

The protein resides in the lysosome. It catalyses the reaction Hydrolysis of proteins and small molecule substrates at -Asn-|-Xaa- bonds.. In terms of biological role, has a strict specificity for hydrolysis of asparaginyl bonds. Can also cleave aspartyl bonds slowly, especially under acidic conditions. Involved in the processing of proteins for MHC class II antigen presentation in the lysosomal/endosomal system. Also involved in MHC class I antigen presentation in cross-presenting dendritic cells by mediating cleavage and maturation of Perforin-2 (MPEG1), thereby promoting antigen translocation in the cytosol. Required for normal lysosomal protein degradation in renal proximal tubules. Required for normal degradation of internalized EGFR. Plays a role in the regulation of cell proliferation via its role in EGFR degradation. This is Legumain (LGMN) from Pongo abelii (Sumatran orangutan).